A 365-amino-acid polypeptide reads, in one-letter code: Peptide chain release factor 2 (365 aa).

Glutamine 251 is modified (N5-methylglutamine).

The protein belongs to the prokaryotic/mitochondrial release factor family. Methylated by PrmC. Methylation increases the termination efficiency of RF2.

It is found in the cytoplasm. Peptide chain release factor 2 directs the termination of translation in response to the peptide chain termination codons UGA and UAA. The polypeptide is Peptide chain release factor 2 (Neorickettsia sennetsu (strain ATCC VR-367 / Miyayama) (Ehrlichia sennetsu)).